A 409-amino-acid chain; its full sequence is Argininosuccinate synthase (409 aa).

ATP is bound by residues 10–18 and Ala-37; that span reads AYSGGLDTS. Residues Tyr-90 and Ser-95 each coordinate L-citrulline. Gly-120 contacts ATP. Residues Thr-122, Asn-126, and Asp-127 each contribute to the L-aspartate site. Asn-126 contributes to the L-citrulline binding site. Arg-130, Ser-182, Ser-191, Glu-267, and Tyr-279 together coordinate L-citrulline.

The protein belongs to the argininosuccinate synthase family. Type 1 subfamily. In terms of assembly, homotetramer.

It is found in the cytoplasm. It carries out the reaction L-citrulline + L-aspartate + ATP = 2-(N(omega)-L-arginino)succinate + AMP + diphosphate + H(+). The protein operates within amino-acid biosynthesis; L-arginine biosynthesis; L-arginine from L-ornithine and carbamoyl phosphate: step 2/3. The sequence is that of Argininosuccinate synthase from Azoarcus sp. (strain BH72).